A 203-amino-acid polypeptide reads, in one-letter code: Chemotactic transduction protein ChpE (203 aa).

Transmembrane regions (helical) follow at residues 3-23 (AIFL…GAVF), 46-66 (LIGD…LLGY), 69-89 (VRIP…VQGL), 123-143 (NVVY…GTPN), and 149-169 (VFFA…AALV).

Belongs to the Rht family.

The protein resides in the cell membrane. The protein is Chemotactic transduction protein ChpE (chpE) of Pseudomonas aeruginosa (strain ATCC 15692 / DSM 22644 / CIP 104116 / JCM 14847 / LMG 12228 / 1C / PRS 101 / PAO1).